Here is a 363-residue protein sequence, read N- to C-terminus: Flagellar P-ring protein 2 (363 aa).

An N-terminal signal peptide occupies residues 1-20; that stretch reads MKRIVLLLMSVALFSTAAQA.

This sequence belongs to the FlgI family. In terms of assembly, the basal body constitutes a major portion of the flagellar organelle and consists of four rings (L,P,S, and M) mounted on a central rod.

It localises to the periplasm. Its subcellular location is the bacterial flagellum basal body. In terms of biological role, assembles around the rod to form the L-ring and probably protects the motor/basal body from shearing forces during rotation. The chain is Flagellar P-ring protein 2 (flgI2) from Vibrio parahaemolyticus serotype O3:K6 (strain RIMD 2210633).